Consider the following 439-residue polypeptide: Probable tRNA pseudouridine synthase D (439 aa).

The Nucleophile role is filled by D87. In terms of domain architecture, TRUD spans 166-391 (GVPNFFGIQR…SKGLRREILL (226 aa)).

It belongs to the pseudouridine synthase TruD family.

It carries out the reaction uridine(13) in tRNA = pseudouridine(13) in tRNA. Functionally, could be responsible for synthesis of pseudouridine from uracil-13 in transfer RNAs. This Methanococcoides burtonii (strain DSM 6242 / NBRC 107633 / OCM 468 / ACE-M) protein is Probable tRNA pseudouridine synthase D.